The sequence spans 331 residues: Tetraacyldisaccharide 4'-kinase (331 aa).

Residue 59–66 (FVGGTGKT) participates in ATP binding.

The protein belongs to the LpxK family.

It catalyses the reaction a lipid A disaccharide + ATP = a lipid IVA + ADP + H(+). It participates in glycolipid biosynthesis; lipid IV(A) biosynthesis; lipid IV(A) from (3R)-3-hydroxytetradecanoyl-[acyl-carrier-protein] and UDP-N-acetyl-alpha-D-glucosamine: step 6/6. Its function is as follows. Transfers the gamma-phosphate of ATP to the 4'-position of a tetraacyldisaccharide 1-phosphate intermediate (termed DS-1-P) to form tetraacyldisaccharide 1,4'-bis-phosphate (lipid IVA). This is Tetraacyldisaccharide 4'-kinase from Alkalilimnicola ehrlichii (strain ATCC BAA-1101 / DSM 17681 / MLHE-1).